Here is a 652-residue protein sequence, read N- to C-terminus: tRNA 5-methylaminomethyl-2-thiouridine biosynthesis bifunctional protein MnmC (652 aa).

The segment at 1 to 227 (MLSWKNDLTP…KREMLTGKYS (227 aa)) is tRNA (mnm(5)s(2)U34)-methyltransferase. The segment at 259–652 (IGAGIAGSTL…ARFLYRRIRK (394 aa)) is FAD-dependent cmnm(5)s(2)U34 oxidoreductase.

In the N-terminal section; belongs to the methyltransferase superfamily. tRNA (mnm(5)s(2)U34)-methyltransferase family. The protein in the C-terminal section; belongs to the DAO family. It depends on FAD as a cofactor.

The protein resides in the cytoplasm. It carries out the reaction 5-aminomethyl-2-thiouridine(34) in tRNA + S-adenosyl-L-methionine = 5-methylaminomethyl-2-thiouridine(34) in tRNA + S-adenosyl-L-homocysteine + H(+). Its function is as follows. Catalyzes the last two steps in the biosynthesis of 5-methylaminomethyl-2-thiouridine (mnm(5)s(2)U) at the wobble position (U34) in tRNA. Catalyzes the FAD-dependent demodification of cmnm(5)s(2)U34 to nm(5)s(2)U34, followed by the transfer of a methyl group from S-adenosyl-L-methionine to nm(5)s(2)U34, to form mnm(5)s(2)U34. The sequence is that of tRNA 5-methylaminomethyl-2-thiouridine biosynthesis bifunctional protein MnmC from Leptospira borgpetersenii serovar Hardjo-bovis (strain JB197).